We begin with the raw amino-acid sequence, 332 residues long: Protein FAM9A (332 aa).

Residues 1 to 13 (MEPVGRKRSRKAA) are compositionally biased toward basic residues. Disordered regions lie at residues 1–114 (MEPV…EHTG) and 186–293 (QKDD…PTGV). Basic and acidic residues-rich tracts occupy residues 74 to 91 (GKDP…FTET) and 98 to 114 (DEHG…EHTG). A compositionally biased stretch (low complexity) spans 196–217 (AAAAAAEAAAAAEAAAAAAEVI). Acidic residues predominate over residues 218 to 275 (VVEDEEEEEKEEEEEKEEEEEEGEEEGGGEEGEEGGGGGEGEETEEEEEEEEEEEEEE). The span at 276 to 285 (QIKAFQEKQK) shows a compositional bias: basic and acidic residues.

This sequence belongs to the XLR/SYCP3 family. In terms of tissue distribution, expressed exclusively in testis.

It localises to the nucleus. The protein resides in the nucleolus. The protein is Protein FAM9A of Homo sapiens (Human).